Here is a 585-residue protein sequence, read N- to C-terminus: Pyruvate kinase (585 aa).

Arginine 32 contributes to the substrate binding site. Residues asparagine 34, serine 36, aspartate 66, and threonine 67 each contribute to the K(+) site. 34 to 37 (NFSH) contributes to the ATP binding site. ATP contacts are provided by arginine 73 and lysine 156. A Mg(2+)-binding site is contributed by glutamate 221. Substrate-binding residues include glycine 244, aspartate 245, and threonine 277. A Mg(2+)-binding site is contributed by aspartate 245.

This sequence belongs to the pyruvate kinase family. In the C-terminal section; belongs to the PEP-utilizing enzyme family. Mg(2+) is required as a cofactor. The cofactor is K(+).

It carries out the reaction pyruvate + ATP = phosphoenolpyruvate + ADP + H(+). It participates in carbohydrate degradation; glycolysis; pyruvate from D-glyceraldehyde 3-phosphate: step 5/5. The chain is Pyruvate kinase (pyk) from Staphylococcus epidermidis (strain ATCC 35984 / DSM 28319 / BCRC 17069 / CCUG 31568 / BM 3577 / RP62A).